The following is a 226-amino-acid chain: Probable chemoreceptor glutamine deamidase CheD (226 aa).

Positions P207–A226 are disordered.

The protein belongs to the CheD family.

It catalyses the reaction L-glutaminyl-[protein] + H2O = L-glutamyl-[protein] + NH4(+). In terms of biological role, probably deamidates glutamine residues to glutamate on methyl-accepting chemotaxis receptors (MCPs), playing an important role in chemotaxis. The protein is Probable chemoreceptor glutamine deamidase CheD of Bordetella bronchiseptica (strain ATCC BAA-588 / NCTC 13252 / RB50) (Alcaligenes bronchisepticus).